The sequence spans 1342 residues: DNA-directed RNA polymerase subunit beta (1342 aa).

Belongs to the RNA polymerase beta chain family. In terms of assembly, the RNAP catalytic core consists of 2 alpha, 1 beta, 1 beta' and 1 omega subunit. When a sigma factor is associated with the core the holoenzyme is formed, which can initiate transcription.

The enzyme catalyses RNA(n) + a ribonucleoside 5'-triphosphate = RNA(n+1) + diphosphate. Its function is as follows. DNA-dependent RNA polymerase catalyzes the transcription of DNA into RNA using the four ribonucleoside triphosphates as substrates. In Photorhabdus laumondii subsp. laumondii (strain DSM 15139 / CIP 105565 / TT01) (Photorhabdus luminescens subsp. laumondii), this protein is DNA-directed RNA polymerase subunit beta.